The chain runs to 256 residues: Phosphatidylglycerol--prolipoprotein diacylglyceryl transferase (256 aa).

Helical transmembrane passes span 19–39 (VHWY…LGYW), 56–76 (LIFY…MLFY), and 91–111 (IWEG…AAWL). Arg139 is a binding site for a 1,2-diacyl-sn-glycero-3-phospho-(1'-sn-glycerol). A helical transmembrane segment spans residues 231-251 (FGWLTMGQVLSIPMLLIGIWL).

Belongs to the Lgt family.

Its subcellular location is the cell inner membrane. It carries out the reaction L-cysteinyl-[prolipoprotein] + a 1,2-diacyl-sn-glycero-3-phospho-(1'-sn-glycerol) = an S-1,2-diacyl-sn-glyceryl-L-cysteinyl-[prolipoprotein] + sn-glycerol 1-phosphate + H(+). It participates in protein modification; lipoprotein biosynthesis (diacylglyceryl transfer). In terms of biological role, catalyzes the transfer of the diacylglyceryl group from phosphatidylglycerol to the sulfhydryl group of the N-terminal cysteine of a prolipoprotein, the first step in the formation of mature lipoproteins. This chain is Phosphatidylglycerol--prolipoprotein diacylglyceryl transferase, found in Legionella pneumophila subsp. pneumophila (strain Philadelphia 1 / ATCC 33152 / DSM 7513).